A 193-amino-acid chain; its full sequence is Large ribosomal subunit protein uL18 (193 aa).

The protein belongs to the universal ribosomal protein uL18 family. Part of the 50S ribosomal subunit. Contacts the 5S and 23S rRNAs.

In terms of biological role, this is one of the proteins that bind and probably mediate the attachment of the 5S RNA into the large ribosomal subunit, where it forms part of the central protuberance. The chain is Large ribosomal subunit protein uL18 from Methanococcus maripaludis (strain C5 / ATCC BAA-1333).